We begin with the raw amino-acid sequence, 142 residues long: Translation initiation factor 2 subunit beta (142 aa).

This sequence belongs to the eIF-2-beta/eIF-5 family. In terms of assembly, heterotrimer composed of an alpha, a beta and a gamma chain.

Functionally, eIF-2 functions in the early steps of protein synthesis by forming a ternary complex with GTP and initiator tRNA. The protein is Translation initiation factor 2 subunit beta of Thermococcus kodakarensis (strain ATCC BAA-918 / JCM 12380 / KOD1) (Pyrococcus kodakaraensis (strain KOD1)).